Reading from the N-terminus, the 269-residue chain is Putative pyruvate, phosphate dikinase regulatory protein (269 aa).

147-154 (GLSRTSKT) is a binding site for ADP.

This sequence belongs to the pyruvate, phosphate/water dikinase regulatory protein family. PDRP subfamily.

It catalyses the reaction N(tele)-phospho-L-histidyl/L-threonyl-[pyruvate, phosphate dikinase] + ADP = N(tele)-phospho-L-histidyl/O-phospho-L-threonyl-[pyruvate, phosphate dikinase] + AMP + H(+). It carries out the reaction N(tele)-phospho-L-histidyl/O-phospho-L-threonyl-[pyruvate, phosphate dikinase] + phosphate + H(+) = N(tele)-phospho-L-histidyl/L-threonyl-[pyruvate, phosphate dikinase] + diphosphate. Functionally, bifunctional serine/threonine kinase and phosphorylase involved in the regulation of the pyruvate, phosphate dikinase (PPDK) by catalyzing its phosphorylation/dephosphorylation. In Clostridium botulinum (strain ATCC 19397 / Type A), this protein is Putative pyruvate, phosphate dikinase regulatory protein.